The chain runs to 115 residues: MGETWFLTPNGQSSPGSWNARPSAGPAARMPTPRNRYFSRPSSTPLKVCTAPRAAPPPRASCAPRATPRRGWTMTPWSNATWPTRRAKTGSASAPAGPASSAPWPARSPERTPSP.

The disordered stretch occupies residues 1 to 115 (MGETWFLTPN…ARSPERTPSP (115 aa)). A compositionally biased stretch (polar residues) spans 7–17 (LTPNGQSSPGS). Low complexity-rich tracts occupy residues 60–70 (ASCAPRATPRR) and 91–107 (SASA…WPAR).

This is an uncharacterized protein from Human adenovirus C serotype 2 (HAdV-2).